Reading from the N-terminus, the 156-residue chain is Regulatory protein RecX (156 aa).

This sequence belongs to the RecX family.

Its subcellular location is the cytoplasm. Functionally, modulates RecA activity. This chain is Regulatory protein RecX, found in Pseudomonas putida (strain ATCC 47054 / DSM 6125 / CFBP 8728 / NCIMB 11950 / KT2440).